We begin with the raw amino-acid sequence, 81 residues long: MKTLLLTLVVVTIVCLDLGYTMTCCNQQSSQPKTTTTCAESSCYKKTWRDHRGTIIERGCGCPNVKPGIQLVCCETNECNN.

Positions 1-21 (MKTLLLTLVVVTIVCLDLGYT) are cleaved as a signal peptide. Cystine bridges form between Cys-24-Cys-43, Cys-38-Cys-60, Cys-62-Cys-73, and Cys-74-Cys-79.

This sequence belongs to the three-finger toxin family. Short-chain subfamily. Type I alpha-neurotoxin sub-subfamily. Expressed by the venom gland.

It is found in the secreted. Binds to muscle nicotinic acetylcholine receptor (nAChR) and inhibit acetylcholine from binding to the receptor, thereby impairing neuromuscular transmission. This chain is Short neurotoxin 1, found in Austrelaps superbus (Lowland copperhead snake).